The following is a 120-amino-acid chain: NAD(P)H-quinone oxidoreductase subunit 3, chloroplastic (120 aa).

3 helical membrane passes run 9–29 (IFWA…LISG), 64–84 (MFAL…PWAM), and 88–108 (VLGV…IVGS).

This sequence belongs to the complex I subunit 3 family. In terms of assembly, NDH is composed of at least 16 different subunits, 5 of which are encoded in the nucleus.

The protein localises to the plastid. Its subcellular location is the chloroplast thylakoid membrane. It carries out the reaction a plastoquinone + NADH + (n+1) H(+)(in) = a plastoquinol + NAD(+) + n H(+)(out). It catalyses the reaction a plastoquinone + NADPH + (n+1) H(+)(in) = a plastoquinol + NADP(+) + n H(+)(out). Functionally, NDH shuttles electrons from NAD(P)H:plastoquinone, via FMN and iron-sulfur (Fe-S) centers, to quinones in the photosynthetic chain and possibly in a chloroplast respiratory chain. The immediate electron acceptor for the enzyme in this species is believed to be plastoquinone. Couples the redox reaction to proton translocation, and thus conserves the redox energy in a proton gradient. The protein is NAD(P)H-quinone oxidoreductase subunit 3, chloroplastic of Platanus occidentalis (Sycamore).